An 874-amino-acid polypeptide reads, in one-letter code: Alanine--tRNA ligase (874 aa).

Residues histidine 562, histidine 566, cysteine 665, and histidine 669 each coordinate Zn(2+).

Belongs to the class-II aminoacyl-tRNA synthetase family. Zn(2+) is required as a cofactor.

It localises to the cytoplasm. The catalysed reaction is tRNA(Ala) + L-alanine + ATP = L-alanyl-tRNA(Ala) + AMP + diphosphate. Its function is as follows. Catalyzes the attachment of alanine to tRNA(Ala) in a two-step reaction: alanine is first activated by ATP to form Ala-AMP and then transferred to the acceptor end of tRNA(Ala). Also edits incorrectly charged Ser-tRNA(Ala) and Gly-tRNA(Ala) via its editing domain. The protein is Alanine--tRNA ligase of Pseudomonas entomophila (strain L48).